Reading from the N-terminus, the 396-residue chain is Cytochrome b (396 aa).

Helical transmembrane passes span 37-57 (FGSL…ILAM), 81-102 (WLMR…YAHI), 117-137 (WNVG…GYVL), and 182-202 (FFTF…IHIM). Positions 87 and 101 each coordinate heme b. Residues H186 and H200 each contribute to the heme b site. H205 provides a ligand contact to a ubiquinone. A run of 4 helical transmembrane segments spans residues 230-250 (FKDI…SLLP), 292-312 (LGGV…PFTH), 324-344 (LAQV…WLGG), and 351-371 (FILM…LIFP).

Belongs to the cytochrome b family. As to quaternary structure, the cytochrome bc1 complex contains 3 respiratory subunits (MT-CYB, CYC1 and UQCRFS1), 2 core proteins (UQCRC1 and UQCRC2) and probably 6 low-molecular weight proteins. The cofactor is heme b.

It is found in the mitochondrion inner membrane. Its function is as follows. Component of the ubiquinol-cytochrome c reductase complex (complex III or cytochrome b-c1 complex) that is part of the mitochondrial respiratory chain. The b-c1 complex mediates electron transfer from ubiquinol to cytochrome c. Contributes to the generation of a proton gradient across the mitochondrial membrane that is then used for ATP synthesis. This chain is Cytochrome b (mt-cyb), found in Lampetra fluviatilis (European river lamprey).